The following is a 304-amino-acid chain: Acetaldehyde dehydrogenase 1 (304 aa).

11-14 contributes to the NAD(+) binding site; that stretch reads SGNI. The active-site Acyl-thioester intermediate is the C130. Residues 161–169 and N272 each bind NAD(+); that span reads SVGPGTRAN.

It belongs to the acetaldehyde dehydrogenase family.

The enzyme catalyses acetaldehyde + NAD(+) + CoA = acetyl-CoA + NADH + H(+). The polypeptide is Acetaldehyde dehydrogenase 1 (lapF) (Azoarcus sp. (strain BH72)).